We begin with the raw amino-acid sequence, 845 residues long: Tyrosine-protein phosphatase corkscrew (845 aa).

2 consecutive SH2 domains span residues 6 to 101 (WFHP…KQPL) and 111 to 205 (WFHG…RQPF). The 419-residue stretch at 227–645 (FWEEFESLQQ…KFVYYAVQHY (419 aa)) folds into the Tyrosine-protein phosphatase domain. The PTPase insert (Cys/Ser-rich) stretch occupies residues 289 to 444 (IRLPTDGDLY…REREREMFKT (156 aa)). Positions 362 to 402 (SKHKRSESSASSSPSSGSGSGPGSSGTSGVSSVNGPGTPTN) are disordered. Low complexity-rich tracts occupy residues 369-378 (SSASSSPSSG) and 388-400 (TSGV…PGTP). At serine 419 the chain carries Phosphoserine. Residues aspartate 545, 583-589 (CSAGIGR), and glutamine 630 each bind substrate. Cysteine 583 serves as the catalytic Phosphocysteine intermediate. The segment at 793–824 (DSLKQQQQREEQAPAGAGKMQQPAPPLRPRPG) is disordered.

Belongs to the protein-tyrosine phosphatase family. Non-receptor class subfamily. As to quaternary structure, interacts with drpr isoform A. In terms of tissue distribution, expressed uniformly throughout all tissues during embryogenesis.

It is found in the cytoplasm. It catalyses the reaction O-phospho-L-tyrosyl-[protein] + H2O = L-tyrosyl-[protein] + phosphate. Required in all receptor tyrosine kinase signaling pathways. Functions downstream of the receptor tyrosine kinase torso, acting in concert with D-Raf via tailless. Also functions downstream of Egfr (epidermal growth factor receptor) and btl (fibroblast growth factor receptor). The SH2 domain suggests that csw effects its role by mediating heteromeric protein interactions. Maternally required for normal determination of cell fates at the termini of the embryo. Required for cell fate specification of the ventral ectoderm, in the developing embryonic CNS and for embryonic tracheal cell migration. Functions during imaginal development for proper formation of adult structures such as eyes, aristae, L5 wing vein and the tarsal claw. Dephosphorylates drpr isoform A which is required for the inhibition by drpr isoform A of glial cell engulfment of axonal debris produced following axonal injury. This chain is Tyrosine-protein phosphatase corkscrew (csw), found in Drosophila melanogaster (Fruit fly).